Reading from the N-terminus, the 154-residue chain is Transcriptional repressor NrdR (154 aa).

A zinc finger lies at 3-34 (CPFCRHPDSRVVDSRETDEGQAIRRRRSCPEC). An ATP-cone domain is found at 46–136 (LAVVKRSGVT…VYRSFESAAD (91 aa)).

The protein belongs to the NrdR family. Zn(2+) is required as a cofactor.

Functionally, negatively regulates transcription of bacterial ribonucleotide reductase nrd genes and operons by binding to NrdR-boxes. This is Transcriptional repressor NrdR from Mycobacterium sp. (strain JLS).